Here is a 693-residue protein sequence, read N- to C-terminus: Phosphoribosylformylglycinamidine synthase subunit PurL (693 aa).

The active site involves His-34. Positions 37 and 76 each coordinate ATP. Glu-78 contacts Mg(2+). Substrate is bound by residues 79–82 (SHNH) and Arg-101. His-80 functions as the Proton acceptor in the catalytic mechanism. Asp-102 is a binding site for Mg(2+). A substrate-binding site is contributed by Gln-222. Position 248 (Asp-248) interacts with Mg(2+). Residue 292-294 (ETQ) participates in substrate binding. ATP is bound by residues Asp-470 and Gly-507. Residue Ser-510 coordinates substrate.

This sequence belongs to the FGAMS family. As to quaternary structure, monomer. Part of the FGAM synthase complex composed of 1 PurL, 1 PurQ and 2 PurS subunits.

The protein resides in the cytoplasm. It carries out the reaction N(2)-formyl-N(1)-(5-phospho-beta-D-ribosyl)glycinamide + L-glutamine + ATP + H2O = 2-formamido-N(1)-(5-O-phospho-beta-D-ribosyl)acetamidine + L-glutamate + ADP + phosphate + H(+). The protein operates within purine metabolism; IMP biosynthesis via de novo pathway; 5-amino-1-(5-phospho-D-ribosyl)imidazole from N(2)-formyl-N(1)-(5-phospho-D-ribosyl)glycinamide: step 1/2. Functionally, part of the phosphoribosylformylglycinamidine synthase complex involved in the purines biosynthetic pathway. Catalyzes the ATP-dependent conversion of formylglycinamide ribonucleotide (FGAR) and glutamine to yield formylglycinamidine ribonucleotide (FGAM) and glutamate. The FGAM synthase complex is composed of three subunits. PurQ produces an ammonia molecule by converting glutamine to glutamate. PurL transfers the ammonia molecule to FGAR to form FGAM in an ATP-dependent manner. PurS interacts with PurQ and PurL and is thought to assist in the transfer of the ammonia molecule from PurQ to PurL. This Pyrobaculum calidifontis (strain DSM 21063 / JCM 11548 / VA1) protein is Phosphoribosylformylglycinamidine synthase subunit PurL.